The sequence spans 285 residues: Polyamine aminopropyltransferase (285 aa).

The PABS domain occupies 2 to 237; sequence QMWFSQYHTV…GYWLFGFASK (236 aa). Glutamine 31 contacts S-methyl-5'-thioadenosine. Position 86 (aspartate 86) interacts with spermidine. S-methyl-5'-thioadenosine is bound by residues glutamate 106 and 137-138; that span reads DG. Aspartate 155 (proton acceptor) is an active-site residue. 155–158 is a binding site for spermidine; the sequence is DSTD.

It belongs to the spermidine/spermine synthase family. As to quaternary structure, homodimer or homotetramer.

The protein localises to the cytoplasm. The catalysed reaction is S-adenosyl 3-(methylsulfanyl)propylamine + putrescine = S-methyl-5'-thioadenosine + spermidine + H(+). Its pathway is amine and polyamine biosynthesis; spermidine biosynthesis; spermidine from putrescine: step 1/1. Catalyzes the irreversible transfer of a propylamine group from the amino donor S-adenosylmethioninamine (decarboxy-AdoMet) to putrescine (1,4-diaminobutane) to yield spermidine. The chain is Polyamine aminopropyltransferase from Agathobacter rectalis (strain ATCC 33656 / DSM 3377 / JCM 17463 / KCTC 5835 / VPI 0990) (Eubacterium rectale).